Here is a 654-residue protein sequence, read N- to C-terminus: Beta-galactosidase-1-like protein (654 aa).

Positions 1–27 are cleaved as a signal peptide; that stretch reads MAPKKPSCLRSLLLPLSLTLLLPQADT. N97 carries an N-linked (GlcNAc...) asparagine glycan. Catalysis depends on E186, which acts as the Proton donor. An N-linked (GlcNAc...) asparagine glycan is attached at N243. E264 serves as the catalytic Nucleophile.

Belongs to the glycosyl hydrolase 35 family.

It localises to the secreted. Functionally, probable glycosyl hydrolase. This chain is Beta-galactosidase-1-like protein (GLB1L), found in Macaca fascicularis (Crab-eating macaque).